A 1233-amino-acid polypeptide reads, in one-letter code: uncharacterized protein (1233 aa).

3 disordered regions span residues 32–51 (SETS…TPKP), 510–529 (ATTN…PVPD), and 882–915 (EVIE…IERS). 2 stretches are compositionally biased toward acidic residues: residues 513–529 (NEEE…PVPD) and 882–905 (EVIE…EDEG). The segment covering 906–915 (DNKQRVIERS) has biased composition (basic and acidic residues).

This is an uncharacterized protein from Dictyostelium discoideum (Social amoeba).